A 102-amino-acid polypeptide reads, in one-letter code: Putative pterin-4-alpha-carbinolamine dehydratase (102 aa).

The protein belongs to the pterin-4-alpha-carbinolamine dehydratase family.

It carries out the reaction (4aS,6R)-4a-hydroxy-L-erythro-5,6,7,8-tetrahydrobiopterin = (6R)-L-erythro-6,7-dihydrobiopterin + H2O. This Burkholderia multivorans (strain ATCC 17616 / 249) protein is Putative pterin-4-alpha-carbinolamine dehydratase.